The following is a 251-amino-acid chain: Adenosylcobinamide-GDP ribazoletransferase (251 aa).

A run of 7 helical transmembrane segments spans residues 36 to 56, 60 to 80, 110 to 130, 141 to 161, 181 to 201, 202 to 222, and 231 to 251; these read LYPF…FVLS, VPIM…TGFL, VGAF…AGMF, ILIF…VSQE, EIIL…TLGI, NYLI…LKVK, and DVAG…LGII.

The protein belongs to the CobS family. It depends on Mg(2+) as a cofactor.

The protein localises to the cell membrane. The enzyme catalyses alpha-ribazole + adenosylcob(III)inamide-GDP = adenosylcob(III)alamin + GMP + H(+). It catalyses the reaction alpha-ribazole 5'-phosphate + adenosylcob(III)inamide-GDP = adenosylcob(III)alamin 5'-phosphate + GMP + H(+). Its pathway is cofactor biosynthesis; adenosylcobalamin biosynthesis; adenosylcobalamin from cob(II)yrinate a,c-diamide: step 7/7. Functionally, joins adenosylcobinamide-GDP and alpha-ribazole to generate adenosylcobalamin (Ado-cobalamin). Also synthesizes adenosylcobalamin 5'-phosphate from adenosylcobinamide-GDP and alpha-ribazole 5'-phosphate. The polypeptide is Adenosylcobinamide-GDP ribazoletransferase (Clostridium perfringens (strain ATCC 13124 / DSM 756 / JCM 1290 / NCIMB 6125 / NCTC 8237 / Type A)).